The sequence spans 372 residues: tRNA-specific 2-thiouridylase MnmA (372 aa).

Residues 13-20 (GMSGGVDS) and methionine 39 each bind ATP. Residues 99-101 (NPD) are interaction with target base in tRNA. Cysteine 104 serves as the catalytic Nucleophile. Cysteine 104 and cysteine 200 are disulfide-bonded. An ATP-binding site is contributed by glycine 128. Positions 150-152 (KDQ) are interaction with tRNA. Cysteine 200 serves as the catalytic Cysteine persulfide intermediate. The interaction with tRNA stretch occupies residues 310-311 (RY).

This sequence belongs to the MnmA/TRMU family.

Its subcellular location is the cytoplasm. It catalyses the reaction S-sulfanyl-L-cysteinyl-[protein] + uridine(34) in tRNA + AH2 + ATP = 2-thiouridine(34) in tRNA + L-cysteinyl-[protein] + A + AMP + diphosphate + H(+). Its function is as follows. Catalyzes the 2-thiolation of uridine at the wobble position (U34) of tRNA, leading to the formation of s(2)U34. In Bacillus licheniformis (strain ATCC 14580 / DSM 13 / JCM 2505 / CCUG 7422 / NBRC 12200 / NCIMB 9375 / NCTC 10341 / NRRL NRS-1264 / Gibson 46), this protein is tRNA-specific 2-thiouridylase MnmA.